The sequence spans 159 residues: Putative 4-hydroxy-4-methyl-2-oxoglutarate aldolase (159 aa).

Substrate contacts are provided by residues 78-81 (GDVI) and R100. A divalent metal cation is bound at residue D101.

It belongs to the class II aldolase/RraA-like family. Homotrimer. It depends on a divalent metal cation as a cofactor.

It carries out the reaction 4-hydroxy-4-methyl-2-oxoglutarate = 2 pyruvate. The enzyme catalyses oxaloacetate + H(+) = pyruvate + CO2. Functionally, catalyzes the aldol cleavage of 4-hydroxy-4-methyl-2-oxoglutarate (HMG) into 2 molecules of pyruvate. Also contains a secondary oxaloacetate (OAA) decarboxylase activity due to the common pyruvate enolate transition state formed following C-C bond cleavage in the retro-aldol and decarboxylation reactions. The polypeptide is Putative 4-hydroxy-4-methyl-2-oxoglutarate aldolase (Mycobacterium sp. (strain KMS)).